The sequence spans 350 residues: Heat-inducible transcription repressor HrcA (350 aa).

The protein belongs to the HrcA family.

Negative regulator of class I heat shock genes (grpE-dnaK-dnaJ and groELS operons). Prevents heat-shock induction of these operons. The polypeptide is Heat-inducible transcription repressor HrcA (Xanthomonas campestris pv. campestris (strain ATCC 33913 / DSM 3586 / NCPPB 528 / LMG 568 / P 25)).